A 574-amino-acid polypeptide reads, in one-letter code: MKRTHTCGELTINNIDQEVILQGWVKKIRKLGAMVFIDLKDRYGITQLVVDQQHIDLINNVKNEYVIEIKGNVVKRKSINKELVTGDIEVIVKELFIINKSELTPFVLENDVNVNEDTRLTYRYLDLRRPVMQNNLIIRAKINHIIRNFLTDSNFLEVETPYFAKSTPEGARDFLVPSRLNKNKFYALPQSPQLFKQLLMISGIDRYYQIVRCFRDEDLRIDRQPEFTQLDLEMSFATSEDVMQISESLIKKILKEVKNFEIKEPLLRLSYKDAIDLYGSDKPDLRYDLKIHTLNDIFKNTNIKFLNNPDLFIRAICIDQLLSKKQLEDLNQQAKQFHFNSIAFIKFENNNWSGSLASQLTENEKELLIKEFDIKNKATIVLNIGKYEQISQLMGAIRISLAKMFNLETKDDFKLLWVVDFPLFEFSEQENRYVAAHHPFTSPKEECLTDFDTNKKDALTCAYDLVMNGFEIGGGSQRITNPEIQQRMFDAVELTTQQVETNFGWFMNAYKYGAPYHAGIAWGLDRISMIVTDSNSIRDVIAFPKNSLGIDMMSNAPDLVSEKQLEELNIKIVK.

E169 is a binding site for L-aspartate. The tract at residues 193–196 (QLFK) is aspartate. L-aspartate is bound at residue R215. ATP-binding positions include 215–217 (RDE) and Q224. H437 contributes to the L-aspartate binding site. Residue E471 participates in ATP binding. R478 contributes to the L-aspartate binding site. Position 523-526 (523-526 (GLDR)) interacts with ATP.

Belongs to the class-II aminoacyl-tRNA synthetase family. Type 1 subfamily. Homodimer.

It is found in the cytoplasm. The enzyme catalyses tRNA(Asp) + L-aspartate + ATP = L-aspartyl-tRNA(Asp) + AMP + diphosphate. Catalyzes the attachment of L-aspartate to tRNA(Asp) in a two-step reaction: L-aspartate is first activated by ATP to form Asp-AMP and then transferred to the acceptor end of tRNA(Asp). The polypeptide is Aspartate--tRNA ligase (Mycoplasma mycoides subsp. mycoides SC (strain CCUG 32753 / NCTC 10114 / PG1)).